Reading from the N-terminus, the 282-residue chain is HTH-type transcriptional activator RhaR (282 aa).

In terms of domain architecture, HTH araC/xylS-type spans 179-277 (DKLITRLAAS…GMTPSQWRHL (99 aa)). DNA-binding regions (H-T-H motif) lie at residues 196-217 (DKFC…RQQT) and 244-267 (ISDI…TRET).

In terms of assembly, binds DNA as a dimer.

The protein localises to the cytoplasm. Functionally, activates expression of the rhaSR operon in response to L-rhamnose. This Shigella dysenteriae serotype 1 (strain Sd197) protein is HTH-type transcriptional activator RhaR.